The following is a 114-amino-acid chain: Iron-sulfur cluster insertion protein ErpA (114 aa).

Iron-sulfur cluster-binding residues include cysteine 42, cysteine 106, and cysteine 108.

This sequence belongs to the HesB/IscA family. Homodimer. It depends on iron-sulfur cluster as a cofactor.

Its function is as follows. Required for insertion of 4Fe-4S clusters for at least IspG. This chain is Iron-sulfur cluster insertion protein ErpA, found in Buchnera aphidicola subsp. Acyrthosiphon pisum (strain APS) (Acyrthosiphon pisum symbiotic bacterium).